Here is a 179-residue protein sequence, read N- to C-terminus: Large ribosomal subunit protein uL6 (179 aa).

The protein belongs to the universal ribosomal protein uL6 family. In terms of assembly, part of the 50S ribosomal subunit.

Its function is as follows. This protein binds to the 23S rRNA, and is important in its secondary structure. It is located near the subunit interface in the base of the L7/L12 stalk, and near the tRNA binding site of the peptidyltransferase center. This Prochlorococcus marinus (strain MIT 9515) protein is Large ribosomal subunit protein uL6.